Here is a 702-residue protein sequence, read N- to C-terminus: MA3 DOMAIN-CONTAINING TRANSLATION REGULATORY FACTOR 1 (702 aa).

The disordered stretch occupies residues 39 to 66; it reads LNIKSPTGGKGPVAGIPNRHVRRTHSGK. Basic residues predominate over residues 57 to 66; it reads RHVRRTHSGK. Residues 122–243 enclose the MI 1 domain; that stretch reads DYKKSVVSII…PPVFLVRSKK (122 aa). The Nuclear localization signal 1 motif lies at 273–280; sequence EKKWGGST. MI domains are found at residues 286-407, 420-541, and 583-702; these read ETKK…TSDQ, QYKK…DIST, and DAKD…SATQ. A Nuclear localization signal 2 motif is present at residues 458-465; the sequence is LKRLITLA.

The protein belongs to the PDCD4 family. Binds to EIF4A1, S6K1 and S6K2. The association with ribosomes is modulated by cellular energy status and TOR activity. Post-translationally, phosphorylation by S6 kinases (e.g. S6K1 and S6K2) is modulated by cellular energy status and TOR activity. As to expression, mostly expressed in vegetative tissues, such as leaves, roots and stems, and, to a lower extent, in reproductive tissues, such as flower buds and flowers.

It is found in the nucleus. The protein resides in the cytoplasm. It localises to the cytosol. Its function is as follows. Involved in target of rapamycin (TOR)-regulated translation control, especially under energy-deficient conditions. The polypeptide is MA3 DOMAIN-CONTAINING TRANSLATION REGULATORY FACTOR 1 (Arabidopsis thaliana (Mouse-ear cress)).